The primary structure comprises 214 residues: MAPTGKRTGESTRSTGPAPPSSAGYLDGRLLIAMPVMGDARFERSVIYLCAHSAEGAMGIIVNHPAGSIDFPELLEQLGIIRKGEHIKLPENAESMKVLRGGPVDTGRGFVLHSSDFYIENATLRIDDGVCLTATVDILRAIANGSGPKHAILALGYAGWAPGQLETEIQSNGWLHCDADADLIFGDDVDEKYGRALRKIGIDPGMLSNEAGHA.

The disordered stretch occupies residues 1-22; the sequence is MAPTGKRTGESTRSTGPAPPSS.

Belongs to the UPF0301 (AlgH) family.

This Bradyrhizobium diazoefficiens (strain JCM 10833 / BCRC 13528 / IAM 13628 / NBRC 14792 / USDA 110) protein is UPF0301 protein blr1492.